The chain runs to 859 residues: Leucine--tRNA ligase (859 aa).

Residues 43–53 (PYPSGRIHMGH) carry the 'HIGH' region motif. Residues 614-618 (KMSKS) carry the 'KMSKS' region motif. Lys617 serves as a coordination point for ATP.

It belongs to the class-I aminoacyl-tRNA synthetase family.

The protein localises to the cytoplasm. The enzyme catalyses tRNA(Leu) + L-leucine + ATP = L-leucyl-tRNA(Leu) + AMP + diphosphate. The protein is Leucine--tRNA ligase of Magnetococcus marinus (strain ATCC BAA-1437 / JCM 17883 / MC-1).